A 390-amino-acid chain; its full sequence is Transforming growth factor beta-1 proprotein (390 aa).

The signal sequence occupies residues 1 to 29 (MPPSGLRLLPLLLPLLWLLMLTPGRPVAG). Residues 30 to 74 (LSTCKTIDMELVKRKRIEAIRGQILSKLRLASPPSQGDVPPGPLP) form a straightjacket domain region. The arm domain stretch occupies residues 75 to 271 (EAILALYNST…ATPLERAQHL (197 aa)). Residues asparagine 82, asparagine 136, and asparagine 176 are each glycosylated (N-linked (GlcNAc...) asparagine). Positions 226-252 (DSKDNTLQVDINGFSSGRRGDLATIHG) are bowtie tail. Residues 244–246 (RGD) carry the Cell attachment site motif. 4 disulfide bridges follow: cysteine 285–cysteine 294, cysteine 293–cysteine 356, cysteine 322–cysteine 387, and cysteine 326–cysteine 389.

Belongs to the TGF-beta family. Homodimer; disulfide-linked. Interacts with the serine proteases, HTRA1 and HTRA3: the interaction with either inhibits TGFB1-mediated signaling and the HTRA protease activity is required for this inhibition. May interact with THSD4; this interaction may lead to sequestration by FBN1 microfibril assembly and attenuation of TGFB signaling. Interacts with CD109, DPT and ASPN. Interacts with EFEMP2. Interacts with TSKU; the interaction contributes to regulation of the hair cycle. Interacts with TGFBR3. In terms of assembly, homodimer; disulfide-linked. Interacts with transforming growth factor beta-1 (TGF-beta-1) chain; interaction is non-covalent and maintains TGF-beta-1 in a latent state; each latency-associated peptide (LAP) monomer interacts with TGF-beta-1 in the other monomer. Interacts with LTBP1; leading to regulation of TGF-beta-1 activation. Interacts with LRRC32/GARP; leading to regulation of TGF-beta-1 activation on the surface of activated regulatory T-cells (Tregs). Interacts with LRRC33/NRROS; leading to regulation of TGF-beta-1 activation in macrophages and microglia. Interacts (via cell attachment site) with integrins ITGAV and ITGB6 (ITGAV:ITGB6), leading to release of the active TGF-beta-1. Interacts with NREP; the interaction results in a decrease in TGFB1 autoinduction. Interacts with HSP90AB1; inhibits latent TGFB1 activation. As to quaternary structure, homodimer; disulfide-linked. Interacts with TGF-beta receptors (TGFBR1 and TGFBR2), leading to signal transduction. Interacts with EFEMP2. In terms of processing, transforming growth factor beta-1 proprotein: The precursor proprotein is cleaved in the Golgi apparatus by FURIN to form Transforming growth factor beta-1 (TGF-beta-1) and Latency-associated peptide (LAP) chains, which remain non-covalently linked, rendering TGF-beta-1 inactive. N-glycosylated. Deglycosylation leads to activation of Transforming growth factor beta-1 (TGF-beta-1); mechanisms triggering deglycosylation-driven activation of TGF-beta-1 are however unclear.

The protein localises to the secreted. Its subcellular location is the extracellular space. It is found in the extracellular matrix. Its function is as follows. Transforming growth factor beta-1 proprotein: Precursor of the Latency-associated peptide (LAP) and Transforming growth factor beta-1 (TGF-beta-1) chains, which constitute the regulatory and active subunit of TGF-beta-1, respectively. In terms of biological role, required to maintain the Transforming growth factor beta-1 (TGF-beta-1) chain in a latent state during storage in extracellular matrix. Associates non-covalently with TGF-beta-1 and regulates its activation via interaction with 'milieu molecules', such as LTBP1, LRRC32/GARP and LRRC33/NRROS, that control activation of TGF-beta-1. Interaction with LRRC33/NRROS regulates activation of TGF-beta-1 in macrophages and microglia. Interaction with LRRC32/GARP controls activation of TGF-beta-1 on the surface of activated regulatory T-cells (Tregs). Interaction with integrins (ITGAV:ITGB6 or ITGAV:ITGB8) results in distortion of the Latency-associated peptide chain and subsequent release of the active TGF-beta-1. Multifunctional protein that regulates the growth and differentiation of various cell types and is involved in various processes, such as normal development, immune function, microglia function and responses to neurodegeneration. Activation into mature form follows different steps: following cleavage of the proprotein in the Golgi apparatus, Latency-associated peptide (LAP) and Transforming growth factor beta-1 (TGF-beta-1) chains remain non-covalently linked rendering TGF-beta-1 inactive during storage in extracellular matrix. At the same time, LAP chain interacts with 'milieu molecules', such as LTBP1, LRRC32/GARP and LRRC33/NRROS that control activation of TGF-beta-1 and maintain it in a latent state during storage in extracellular milieus. TGF-beta-1 is released from LAP by integrins (ITGAV:ITGB6 or ITGAV:ITGB8): integrin-binding to LAP stabilizes an alternative conformation of the LAP bowtie tail and results in distortion of the LAP chain and subsequent release of the active TGF-beta-1. Once activated following release of LAP, TGF-beta-1 acts by binding to TGF-beta receptors (TGFBR1 and TGFBR2), which transduce signal. While expressed by many cells types, TGF-beta-1 only has a very localized range of action within cell environment thanks to fine regulation of its activation by Latency-associated peptide chain (LAP) and 'milieu molecules'. Plays an important role in bone remodeling: acts as a potent stimulator of osteoblastic bone formation, causing chemotaxis, proliferation and differentiation in committed osteoblasts. Can promote either T-helper 17 cells (Th17) or regulatory T-cells (Treg) lineage differentiation in a concentration-dependent manner. At high concentrations, leads to FOXP3-mediated suppression of RORC and down-regulation of IL-17 expression, favoring Treg cell development. At low concentrations in concert with IL-6 and IL-21, leads to expression of the IL-17 and IL-23 receptors, favoring differentiation to Th17 cells. Stimulates sustained production of collagen through the activation of CREB3L1 by regulated intramembrane proteolysis (RIP). Mediates SMAD2/3 activation by inducing its phosphorylation and subsequent translocation to the nucleus. Positively regulates odontoblastic differentiation in dental papilla cells, via promotion of IPO7-mediated translocation of phosphorylated SMAD2 to the nucleus and subsequent transcription of target genes. Can induce epithelial-to-mesenchymal transition (EMT) and cell migration in various cell types. The sequence is that of Transforming growth factor beta-1 proprotein (TGFB1) from Bos taurus (Bovine).